The sequence spans 612 residues: Putative pentatricopeptide repeat-containing protein At5g40405 (612 aa).

10 PPR repeats span residues 70-104 (TLFA…GNDL), 107-141 (DNYT…GFDN), 142-172 (DPHV…IPCP), 173-203 (DFVC…MPER), 204-238 (DPIA…GVKV), 239-273 (NGVA…KIKI), 274-304 (TVRL…MEEK), 305-339 (NVYT…GVTP), 340-375 (NAVT…GIEP), and 376-410 (QLEH…PHAA). Residues 411–486 (VWSSLLHASR…QPGCSVMEVN (76 aa)) are type E motif. A type E(+) motif region spans residues 487 to 517 (GEVHEFFVGDKSHPKYTQIDAVWKDISRRLR). The tract at residues 518–612 (LAGYKADTTP…DGHCSCNGFW (95 aa)) is type DYW motif.

It belongs to the PPR family. PCMP-H subfamily.

The chain is Putative pentatricopeptide repeat-containing protein At5g40405 (PCMP-H14) from Arabidopsis thaliana (Mouse-ear cress).